We begin with the raw amino-acid sequence, 256 residues long: 3-hydroxy-5-phosphonooxypentane-2,4-dione thiolase (256 aa).

Residue lysine 168 is the Schiff-base intermediate with substrate of the active site.

Belongs to the DeoC/FbaB aldolase family. In terms of assembly, homodecamer.

Its subcellular location is the cytoplasm. It catalyses the reaction dihydroxyacetone phosphate + acetyl-CoA = 3-hydroxy-2,4-dioxopentyl phosphate + CoA. Functionally, involved in the degradation of phospho-AI-2, thereby terminating induction of the lsr operon and closing the AI-2 signaling cycle. Catalyzes the transfer of an acetyl moiety from 3-hydroxy-5-phosphonooxypentane-2,4-dione to CoA to form glycerone phosphate and acetyl-CoA. The polypeptide is 3-hydroxy-5-phosphonooxypentane-2,4-dione thiolase (lsrF) (Shigella flexneri).